The following is a 107-amino-acid chain: Large ribosomal subunit protein P2 (107 aa).

The interval 86 to 107 (PAAAAAEAEEEDDDDMGFGLFD) is disordered. Positions 92 to 101 (EAEEEDDDDM) are enriched in acidic residues.

It belongs to the eukaryotic ribosomal protein P1/P2 family. As to quaternary structure, P1 and P2 exist as dimers at the large ribosomal subunit. In terms of processing, phosphorylated.

Plays an important role in the elongation step of protein synthesis. In Trypanosoma brucei brucei, this protein is Large ribosomal subunit protein P2.